The sequence spans 252 residues: MILHAQAKHGKPGLPWLVFLHGFSGDCHEWQEVGEAFADYSRLYVDLPGHGGSAAISVDGFDDVTDLLRKTLVSYNILDFWLVGYSLGGRVAMMAACQGLAGLCGVIVEGGHPGLQNAEQRAERQRSDRQWAQRFRTEPLTAVFADWYQQPVFASLNDDQRRELVALRSNNNGATLAAMLEATSLAVQPDLRANLSARTFAFYYLCGERDSKFRALAAELAADCHVIPRAGHNAHRENPAGVIASLAQILRF.

This sequence belongs to the AB hydrolase superfamily. MenH family. In terms of assembly, monomer.

The catalysed reaction is 5-enolpyruvoyl-6-hydroxy-2-succinyl-cyclohex-3-ene-1-carboxylate = (1R,6R)-6-hydroxy-2-succinyl-cyclohexa-2,4-diene-1-carboxylate + pyruvate. Its pathway is quinol/quinone metabolism; 1,4-dihydroxy-2-naphthoate biosynthesis; 1,4-dihydroxy-2-naphthoate from chorismate: step 3/7. It functions in the pathway quinol/quinone metabolism; menaquinone biosynthesis. Its function is as follows. Catalyzes a proton abstraction reaction that results in 2,5-elimination of pyruvate from 2-succinyl-5-enolpyruvyl-6-hydroxy-3-cyclohexene-1-carboxylate (SEPHCHC) and the formation of 2-succinyl-6-hydroxy-2,4-cyclohexadiene-1-carboxylate (SHCHC). The chain is 2-succinyl-6-hydroxy-2,4-cyclohexadiene-1-carboxylate synthase from Shigella boydii serotype 4 (strain Sb227).